Here is a 567-residue protein sequence, read N- to C-terminus: Geraniol synthase, chloroplastic (567 aa).

The transit peptide at 1-63 (MSCARITVTL…GDNSQRKNTR (63 aa)) directs the protein to the chloroplast. Residues 48–75 (STPLINGDNSQRKNTRQHMEESSSKRRE) form a disordered region. A compositionally biased stretch (basic and acidic residues) spans 64–75 (QHMEESSSKRRE). 5 residues coordinate (2E)-geranyl diphosphate: Arg286, Asp323, Asp327, Arg466, and Asp469. Mn(2+)-binding residues include Asp323 and Asp327. The DDXXD motif signature appears at 323 to 327 (DDIFD). Mn(2+) is bound by residues Asp469, Thr473, and Glu477.

This sequence belongs to the terpene synthase family. Tpsb subfamily. In terms of assembly, homodimer. Mn(2+) is required as a cofactor. As to expression, expressed in the peltate glandular trichomes of the leaves.

The protein resides in the plastid. It localises to the chloroplast. The catalysed reaction is (2E)-geranyl diphosphate + H2O = (2E)-geraniol + diphosphate. It participates in secondary metabolite biosynthesis; terpenoid biosynthesis. Functionally, monoterpene synthase that catalyzes the formation of geraniol from geranyl diphosphate. The chain is Geraniol synthase, chloroplastic (GES) from Ocimum basilicum (Sweet basil).